We begin with the raw amino-acid sequence, 229 residues long: High molecular weight rubredoxin (229 aa).

Positions 1–158 are flavodoxin-reductase-like; that stretch reads MDTKALHTLT…YYHQVKRGTT (158 aa). The Rubredoxin-like domain maps to 178 to 229; sequence SPKYQCTICNYVYDPVQGDPEHGIAPGTPFADLPEDWTCPICGAGKDAFEQI. Residues Cys183, Cys186, Cys216, and Cys219 each coordinate Fe cation.

The protein in the N-terminal section; belongs to the flavodoxin reductase family. As to quaternary structure, homodimer. The cofactor is Fe cation. It depends on FMN as a cofactor.

Its function is as follows. Has nitric oxide reductase activity in combination with FprA; probably involved in nitrosative stress protection. Acts as an NADH:FprA oxidoreductase. The chain is High molecular weight rubredoxin (hrb) from Moorella thermoacetica (strain ATCC 39073 / JCM 9320).